Reading from the N-terminus, the 338-residue chain is tRNA N6-adenosine threonylcarbamoyltransferase (338 aa).

Residues His114 and His118 each coordinate Fe cation. Substrate-binding positions include 137-141, Asp170, Gly183, Asp187, and Asn277; that span reads IVSGG. Asp305 serves as a coordination point for Fe cation.

This sequence belongs to the KAE1 / TsaD family. Requires Fe(2+) as cofactor.

The protein resides in the cytoplasm. It carries out the reaction L-threonylcarbamoyladenylate + adenosine(37) in tRNA = N(6)-L-threonylcarbamoyladenosine(37) in tRNA + AMP + H(+). Its function is as follows. Required for the formation of a threonylcarbamoyl group on adenosine at position 37 (t(6)A37) in tRNAs that read codons beginning with adenine. Is involved in the transfer of the threonylcarbamoyl moiety of threonylcarbamoyl-AMP (TC-AMP) to the N6 group of A37, together with TsaE and TsaB. TsaD likely plays a direct catalytic role in this reaction. The chain is tRNA N6-adenosine threonylcarbamoyltransferase from Clostridioides difficile (strain 630) (Peptoclostridium difficile).